The following is a 354-amino-acid chain: UDP-3-O-acylglucosamine N-acyltransferase (354 aa).

His247 functions as the Proton acceptor in the catalytic mechanism.

This sequence belongs to the transferase hexapeptide repeat family. LpxD subfamily. Homotrimer.

It carries out the reaction a UDP-3-O-[(3R)-3-hydroxyacyl]-alpha-D-glucosamine + a (3R)-hydroxyacyl-[ACP] = a UDP-2-N,3-O-bis[(3R)-3-hydroxyacyl]-alpha-D-glucosamine + holo-[ACP] + H(+). It functions in the pathway bacterial outer membrane biogenesis; LPS lipid A biosynthesis. Functionally, catalyzes the N-acylation of UDP-3-O-acylglucosamine using 3-hydroxyacyl-ACP as the acyl donor. Is involved in the biosynthesis of lipid A, a phosphorylated glycolipid that anchors the lipopolysaccharide to the outer membrane of the cell. This Chlamydia trachomatis serovar L2b (strain UCH-1/proctitis) protein is UDP-3-O-acylglucosamine N-acyltransferase.